Reading from the N-terminus, the 591-residue chain is L-fucose isomerase (591 aa).

Residues E337 and D361 each act as proton acceptor in the active site. Residues E337, D361, and H528 each coordinate Mn(2+).

It belongs to the L-fucose isomerase family. Homohexamer. The cofactor is Mn(2+).

Its subcellular location is the cytoplasm. It catalyses the reaction L-fucose = L-fuculose. It functions in the pathway carbohydrate degradation; L-fucose degradation; L-lactaldehyde and glycerone phosphate from L-fucose: step 1/3. Its function is as follows. Converts the aldose L-fucose into the corresponding ketose L-fuculose. The polypeptide is L-fucose isomerase (Escherichia coli (strain UTI89 / UPEC)).